The following is a 103-amino-acid chain: Large ribosomal subunit protein eL42 (103 aa).

Residues 37–56 form a disordered region; that stretch reads GKRRYDRKQSGFGGQTKPVF.

It belongs to the eukaryotic ribosomal protein eL42 family.

In Dictyostelium discoideum (Social amoeba), this protein is Large ribosomal subunit protein eL42 (rpl36a).